Reading from the N-terminus, the 325-residue chain is Malate dehydrogenase (325 aa).

NAD(+) is bound at residue 11-17 (GAAGQIA). 2 residues coordinate substrate: Arg92 and Arg98. NAD(+)-binding positions include Asn105, Gln112, and 129-131 (VGN). Substrate-binding residues include Asn131 and Arg162. The active-site Proton acceptor is the His187.

This sequence belongs to the LDH/MDH superfamily. MDH type 2 family.

The catalysed reaction is (S)-malate + NAD(+) = oxaloacetate + NADH + H(+). Catalyzes the reversible oxidation of malate to oxaloacetate. This Methylococcus capsulatus (strain ATCC 33009 / NCIMB 11132 / Bath) protein is Malate dehydrogenase.